The sequence spans 489 residues: GDP-fucose protein O-fucosyltransferase 4 (489 aa).

Over 1–7 the chain is Cytoplasmic; the sequence is MAARCTE. The chain crosses the membrane as a helical; Signal-anchor for type II membrane protein span at residues 8–24; it reads AVLAALGVLSVCSASSS. At 25 to 489 the chain is on the lumenal side; sequence GSEASGEAER…EIFMKRNKNL (465 aa). N-linked (GlcNAc...) asparagine glycosylation occurs at N162. C385 and C388 are disulfide-bonded.

Belongs to the glycosyltransferase 10 family. Widely expressed. Expressed at slightly higher level in heart, kidney and lung.

It is found in the endoplasmic reticulum membrane. The enzyme catalyses L-threonyl-[protein] + GDP-beta-L-fucose = 3-O-(alpha-L-fucosyl)-L-threonyl-[protein] + GDP + H(+). The catalysed reaction is L-seryl-[protein] + GDP-beta-L-fucose = 3-O-(alpha-L-fucosyl)-L-seryl-[protein] + GDP + H(+). Its pathway is protein modification; protein glycosylation. Protein O-fucosyltransferase that specifically catalyzes O-fucosylation of serine or threonine residues in EMI domains of target proteins, such as MMRN1, MMRN2 and EMID1. Attaches fucose through an O-glycosidic linkage. O-fucosylation of EMI domain-containing proteins may be required for facilitating protein folding and secretion. Also shows minor alpha-(1,3)-fucosyltransferase activity toward activity toward biantennary N-glycan acceptors. However, this was tested with a library of synthetic substrates and this activity is unsure in vivo. This Mus musculus (Mouse) protein is GDP-fucose protein O-fucosyltransferase 4 (Fut11).